A 514-amino-acid polypeptide reads, in one-letter code: 2-isopropylmalate synthase (514 aa).

In terms of domain architecture, Pyruvate carboxyltransferase spans 5-268 (LIIFDTTLRD…DVGLDTTQIV (264 aa)). The Mn(2+) site is built by Asp-14, His-202, His-204, and Asn-239. Positions 395 to 514 (KFVSLSQRSE…KDDKLNPQRS (120 aa)) are regulatory domain.

Belongs to the alpha-IPM synthase/homocitrate synthase family. LeuA type 1 subfamily. As to quaternary structure, homodimer. The cofactor is Mn(2+).

The protein localises to the cytoplasm. The enzyme catalyses 3-methyl-2-oxobutanoate + acetyl-CoA + H2O = (2S)-2-isopropylmalate + CoA + H(+). The protein operates within amino-acid biosynthesis; L-leucine biosynthesis; L-leucine from 3-methyl-2-oxobutanoate: step 1/4. Functionally, catalyzes the condensation of the acetyl group of acetyl-CoA with 3-methyl-2-oxobutanoate (2-ketoisovalerate) to form 3-carboxy-3-hydroxy-4-methylpentanoate (2-isopropylmalate). This Burkholderia ambifaria (strain MC40-6) protein is 2-isopropylmalate synthase.